Reading from the N-terminus, the 286-residue chain is uncharacterized protein (286 aa).

Residues isoleucine 54, asparagine 128, and lysine 162 each contribute to the NADP(+) site. The Proton donor role is filled by serine 178. Tyrosine 192, lysine 196, isoleucine 225, and threonine 227 together coordinate NADP(+). Tyrosine 192 acts as the Proton acceptor in catalysis. The active-site Lowers pKa of active site Tyr is lysine 196.

This sequence belongs to the short-chain dehydrogenases/reductases (SDR) family.

This is an uncharacterized protein from Schizosaccharomyces pombe (strain 972 / ATCC 24843) (Fission yeast).